We begin with the raw amino-acid sequence, 91 residues long: Early E3B 10.4 kDa protein (91 aa).

The signal sequence occupies residues 1–22 (MIPRVLILLTLVALFCACSTLA). The Lumenal portion of the chain corresponds to 23–34 (AVAHIEVDCIPP). A helical membrane pass occupies residues 35–60 (FTVYLLYGFVTLILICSLVTVVIAFI). Residues 61–91 (QFIDWICVRIAYLRHHPQYRDRTIADLLRIL) are Cytoplasmic-facing.

The protein belongs to the adenoviridae E3B family.

It is found in the host endoplasmic reticulum membrane. In terms of biological role, down-regulates the EGF receptor. This Homo sapiens (Human) protein is Early E3B 10.4 kDa protein.